Reading from the N-terminus, the 239-residue chain is Aspartate/glutamate leucyltransferase (239 aa).

It belongs to the R-transferase family. Bpt subfamily.

It localises to the cytoplasm. The enzyme catalyses N-terminal L-glutamyl-[protein] + L-leucyl-tRNA(Leu) = N-terminal L-leucyl-L-glutamyl-[protein] + tRNA(Leu) + H(+). It catalyses the reaction N-terminal L-aspartyl-[protein] + L-leucyl-tRNA(Leu) = N-terminal L-leucyl-L-aspartyl-[protein] + tRNA(Leu) + H(+). Functions in the N-end rule pathway of protein degradation where it conjugates Leu from its aminoacyl-tRNA to the N-termini of proteins containing an N-terminal aspartate or glutamate. The protein is Aspartate/glutamate leucyltransferase of Campylobacter jejuni subsp. jejuni serotype O:23/36 (strain 81-176).